Here is a 191-residue protein sequence, read N- to C-terminus: Adenylate kinase (191 aa).

Residue Gly12–Thr17 participates in ATP binding. The tract at residues Ser34–Val63 is NMP. Residues Thr35, Arg40, Glu61–Val63, Gly88–Arg91, and Gln95 contribute to the AMP site. Residues Gly130 to Asp136 are LID. Arg131 provides a ligand contact to ATP. Arg133 and Arg145 together coordinate AMP. Arg173 provides a ligand contact to ATP.

This sequence belongs to the adenylate kinase family. As to quaternary structure, monomer.

The protein resides in the cytoplasm. It carries out the reaction AMP + ATP = 2 ADP. It participates in purine metabolism; AMP biosynthesis via salvage pathway; AMP from ADP: step 1/1. Its function is as follows. Catalyzes the reversible transfer of the terminal phosphate group between ATP and AMP. Plays an important role in cellular energy homeostasis and in adenine nucleotide metabolism. In Helicobacter pylori (strain G27), this protein is Adenylate kinase.